Reading from the N-terminus, the 295-residue chain is Protease HtpX (295 aa).

2 consecutive transmembrane segments (helical) span residues 4 to 24 (ILLFVATNLAVVLVASITLSL) and 41 to 61 (SSLLVFCAVFGFAGSLVSLFI). A Zn(2+)-binding site is contributed by His147. Residue Glu148 is part of the active site. His151 is a binding site for Zn(2+). The next 2 membrane-spanning stretches (helical) occupy residues 158–178 (VTLALVQGVVNTFVMFFARII) and 199–219 (VATIVAELVLGILASMIVMWF). Residue Glu224 participates in Zn(2+) binding.

It belongs to the peptidase M48B family. Zn(2+) serves as cofactor.

It is found in the cell inner membrane. The polypeptide is Protease HtpX (Pseudomonas putida (strain W619)).